The following is a 228-amino-acid chain: Urease accessory protein UreF (228 aa).

The protein belongs to the UreF family. In terms of assembly, ureD, UreF and UreG form a complex that acts as a GTP-hydrolysis-dependent molecular chaperone, activating the urease apoprotein by helping to assemble the nickel containing metallocenter of UreC. The UreE protein probably delivers the nickel.

It is found in the cytoplasm. Required for maturation of urease via the functional incorporation of the urease nickel metallocenter. This Alkalilimnicola ehrlichii (strain ATCC BAA-1101 / DSM 17681 / MLHE-1) protein is Urease accessory protein UreF.